The sequence spans 185 residues: Protein FAM219A (185 aa).

Position 1 is an N-acetylmethionine (methionine 1). Residues 1 to 131 (MMEEIDRFQV…SRYSSSGYSS (131 aa)) are disordered. Residue serine 47 is modified to Phosphoserine. Basic and acidic residues predominate over residues 52-61 (KLEKQRELAR). Residues 66–80 (KNGSMGSPVNQQPKK) are compositionally biased toward polar residues. Serine 72 and serine 102 each carry phosphoserine. Phosphothreonine is present on threonine 113. 2 positions are modified to phosphoserine: serine 115 and serine 122. Residues 122–131 (SRYSSSGYSS) are compositionally biased toward low complexity.

The protein belongs to the FAM219 family.

The protein is Protein FAM219A (FAM219A) of Homo sapiens (Human).